The sequence spans 1133 residues: Probable cation-transporting ATPase 9 (1133 aa).

The Cytoplasmic portion of the chain corresponds to 1–6; the sequence is MRVSSI. A helical membrane pass occupies residues 7 to 28; sequence EAEMENPIDVDKTDVEGELKIK. At 29–34 the chain is on the extracellular side; it reads QVTLLR. The helical transmembrane segment at 35–53 threads the bilayer; it reads ENIVKKIVFFLVAIFCSDR. Over 54 to 167 the chain is Cytoplasmic; it reads PSVLKKVFYE…IEINVPSFLT (114 aa). The helical transmembrane segment at 168–190 threads the bilayer; the sequence is LMWREFKKPINFLLYFGIIVWGI. Topologically, residues 191–193 are extracellular; it reads EQM. A helical membrane pass occupies residues 194–212; the sequence is YVSTAITVVFTTTINSLIC. Over 213–363 the chain is Cytoplasmic; that stretch reads IYIRGVMQKL…PFNKKFQQQA (151 aa). Residues 364 to 383 traverse the membrane as a helical segment; that stretch reads VKLTILMATLLLIGFLSTLS. At 384–396 the chain is on the extracellular side; sequence RLLDIELPPLFIA. A helical membrane pass occupies residues 397–418; it reads FRFLDILIYSAPPGMPMLIAIT. At 419–887 the chain is on the cytoplasmic side; sequence NFVGLKRLKN…NSVEIFKGYL (469 aa). The active-site 4-aspartylphosphate intermediate is the D451. Residues D827 and D831 each contribute to the Mg(2+) site. A helical membrane pass occupies residues 888–906; it reads QVALLRYLGFLTLAYFYSS. Residues 907–915 are Extracellular-facing; sequence YSSGQMDWQ. Residues 916–931 traverse the membrane as a helical segment; that stretch reads ALASGYFLVYLILGCN. At 932–948 the chain is on the cytoplasmic side; it reads TPLKKLEKSVFDDNLFS. The chain crosses the membrane as a helical span at residues 949-972; the sequence is IYNVTSVLFGFTLHILSIVGCVES. Over 973 to 994 the chain is Extracellular; sequence LHASPIYKEVNSLDAENNFQFE. A helical membrane pass occupies residues 995-1018; that stretch reads TQHNTVLNFNILINFFYVIISNHI. Residues 1019–1030 lie on the Cytoplasmic side of the membrane; that stretch reads GKPMKDRYYKNT. The helical transmembrane segment at 1031–1050 threads the bilayer; sequence IAIYYDLGLIYTCKCMILQV. Topologically, residues 1051–1101 are extracellular; it reads LLILEHTHHGLIFLILLLDQEFSSSLTVQVYFSLPMNLFLPEEFSLNFTQE. The helical transmembrane segment at 1102-1124 threads the bilayer; that stretch reads VKKEKELLICNSSSTILEVDYNL. Residues 1125–1133 lie on the Cytoplasmic side of the membrane; the sequence is RLNYFQQNF.

It belongs to the cation transport ATPase (P-type) (TC 3.A.3) family. Type V subfamily.

It is found in the membrane. The catalysed reaction is ATP + H2O = ADP + phosphate + H(+). The polypeptide is Probable cation-transporting ATPase 9 (TPA9) (Tetrahymena thermophila).